Consider the following 192-residue polypeptide: Vascular endothelial growth factor A (192 aa).

The N-terminal stretch at 1 to 26 (MNFLLTWIHWGLAALLYFHNAKVLQA) is a signal peptide. 3 disulfides stabilise this stretch: Cys-52/Cys-94, Cys-83/Cys-128, and Cys-87/Cys-130. Residue Asn-101 is glycosylated (N-linked (GlcNAc...) asparagine).

Belongs to the PDGF/VEGF growth factor family. As to quaternary structure, homodimer; disulfide-linked. Also found as heterodimer with PGF. Interacts with FLT1/VEGFR1 and KDR/VEGFR2 receptors, heparan sulfate and heparin. In terms of tissue distribution, expressed by the venom gland, and probably other tissues.

Its subcellular location is the secreted. Growth factor active in angiogenesis, vasculogenesis and endothelial cell growth. Induces endothelial cell proliferation, promotes cell migration, inhibits apoptosis and induces permeabilization of blood vessels. The polypeptide is Vascular endothelial growth factor A (Agkistrodon piscivorus piscivorus (Eastern cottonmouth)).